Consider the following 208-residue polypeptide: Small ribosomal subunit protein uS4 (208 aa).

In terms of domain architecture, S4 RNA-binding spans 98-158 (RRLDNIAYRL…EKSRKVACIN (61 aa)).

The protein belongs to the universal ribosomal protein uS4 family. In terms of assembly, part of the 30S ribosomal subunit. Contacts protein S5. The interaction surface between S4 and S5 is involved in control of translational fidelity.

Its function is as follows. One of the primary rRNA binding proteins, it binds directly to 16S rRNA where it nucleates assembly of the body of the 30S subunit. With S5 and S12 plays an important role in translational accuracy. The protein is Small ribosomal subunit protein uS4 of Geotalea uraniireducens (strain Rf4) (Geobacter uraniireducens).